The chain runs to 162 residues: MEKIFERLMYASRWIMAPIYLGLSLVLLGLGIKFFQEIFHILPIIFEMTEVDLVLVTLSLIDITLVGGLIVMVMFSGYENFVSQLDVGEDSEKLSWLGKLDSGSLKNKVAASIVAISSIHLLKIFMDVKNIDNDKIMWYLLIHITFVLSAFAMGYLDKMTRK.

The next 3 helical transmembrane spans lie at 10 to 32, 53 to 75, and 136 to 156; these read YASR…GLGI, LVLV…MVMF, and IMWY…MGYL.

Belongs to the UPF0114 family.

Its subcellular location is the cell membrane. The chain is UPF0114 protein SO_3997 from Shewanella oneidensis (strain ATCC 700550 / JCM 31522 / CIP 106686 / LMG 19005 / NCIMB 14063 / MR-1).